The sequence spans 412 residues: Orcinol synthase (412 aa).

Residues cysteine 164, histidine 322, and asparagine 355 contribute to the active site.

Belongs to the thiolase-like superfamily. Chalcone/stilbene synthases family. In terms of assembly, homodimer. In terms of tissue distribution, mainly expressed in young leaves, and barely in mature leaves and twigs.

It carries out the reaction 3 malonyl-CoA + acetyl-CoA + 3 H(+) = orcinol + 4 CO2 + 4 CoA. The enzyme catalyses 3 malonyl-CoA + acetyl-CoA + 2 H(+) = orsellinate + 3 CO2 + 4 CoA. It catalyses the reaction 3 malonyl-CoA + acetyl-CoA + 3 H(+) = tetraacetate lactone + 3 CO2 + 4 CoA. The catalysed reaction is 2 malonyl-CoA + acetyl-CoA + 2 H(+) = triacetate lactone + 2 CO2 + 3 CoA. It carries out the reaction 3 malonyl-CoA + acetyl-CoA + 3 H(+) = 2-acetylphloroglucinol + 3 CO2 + 4 CoA. The protein operates within secondary metabolite biosynthesis; terpenoid biosynthesis. Functionally, involved in the biosynthesis of acetate-derived aromatic tetraketides natural products, precursors of daurichromenic acid, an anti-human immunodeficiency viruses (HIV) meroterpenoid consisting of sesquiterpene and orsellinic acid (OSA) moieties. Accepts acetyl-CoA as starter substrate and produces orcinol as the major reaction product, along with four minor products including OSA, tetraacetate lactone, triacetate lactone and 2-acetylphloroglucinol. This is Orcinol synthase from Rhododendron dauricum (Azalea daurica).